The following is a 187-amino-acid chain: Adenine phosphoribosyltransferase (187 aa).

Belongs to the purine/pyrimidine phosphoribosyltransferase family. Homodimer.

The protein localises to the cytoplasm. The enzyme catalyses AMP + diphosphate = 5-phospho-alpha-D-ribose 1-diphosphate + adenine. Its pathway is purine metabolism; AMP biosynthesis via salvage pathway; AMP from adenine: step 1/1. Functionally, catalyzes a salvage reaction resulting in the formation of AMP, that is energically less costly than de novo synthesis. This is Adenine phosphoribosyltransferase from Paracoccus denitrificans (strain Pd 1222).